The following is a 1089-amino-acid chain: Platelet-derived growth factor receptor alpha (1089 aa).

A signal peptide spans 1-23 (MGTSHPAFLVLGCLLTGLSLILC). Ig-like C2-type domains follow at residues 24–113 (QLSL…NELE), 117–201 (IYIY…FQTI), 202–306 (PFNV…KKVT), 319–410 (PTFS…FELL), and 414–517 (PSSI…LKLV). The Extracellular portion of the chain corresponds to 24 to 528 (QLSLPSILPN…PTLRSELTVA (505 aa)). Asn-42, Asn-76, Asn-103, and Asn-179 each carry an N-linked (GlcNAc...) asparagine glycan. Residues Cys-49 and Cys-100 are joined by a disulfide bond. 2 disulfide bridges follow: Cys-150–Cys-189 and Cys-235–Cys-290. Residues Asn-353, Asn-359, Asn-458, and Asn-468 are each glycosylated (N-linked (GlcNAc...) asparagine). Residues Cys-435 and Cys-501 are joined by a disulfide bond. A helical transmembrane segment spans residues 529–549 (AAVLVLLVIVIISLIVLVVIW). Residues 550–1089 (KQKPRYEIRW…SSDLVEDSFL (540 aa)) are Cytoplasmic-facing. Tyr-572 and Tyr-574 each carry phosphotyrosine; by autocatalysis. Residues 593-954 (LVLGRVLGSG…HLSEIVENLL (362 aa)) enclose the Protein kinase domain. Residues 599–607 (LGSGAFGKV) and Lys-627 contribute to the ATP site. Tyr-720, Tyr-731, Tyr-742, Tyr-754, Tyr-762, and Tyr-768 each carry phosphotyrosine; by autocatalysis. Asp-818 (proton acceptor) is an active-site residue. A phosphotyrosine; by autocatalysis mark is found at Tyr-849, Tyr-988, and Tyr-1018. The interval 1018–1089 (YIIPLPDIDP…SSDLVEDSFL (72 aa)) is disordered. Residues 1041–1059 (SSQTSEESAIETGSSSSTF) show a composition bias toward polar residues. Residues 1065–1089 (ETIEDIDMMDDIGIDSSDLVEDSFL) are compositionally biased toward acidic residues.

Belongs to the protein kinase superfamily. Tyr protein kinase family. CSF-1/PDGF receptor subfamily. Interacts with homodimeric PDGFA, PDGFB and PDGFC, and with heterodimers formed by PDGFA and PDGFB. Monomer in the absence of bound ligand. Interaction with dimeric PDGFA, PDGFB and/or PDGFC leads to receptor dimerization, where both PDGFRA homodimers and heterodimers with PDGFRB are observed. Interacts (tyrosine phosphorylated) with SHB (via SH2 domain). Interacts (tyrosine phosphorylated) with SHF (via SH2 domain). Interacts (tyrosine phosphorylated) with SRC (via SH2 domain). Interacts (tyrosine phosphorylated) with PIK3R1. Interacts (tyrosine phosphorylated) with PLCG1 (via SH2 domain). Interacts (tyrosine phosphorylated) with CRK, GRB2 and GRB7. Interacts with CD248; this interaction promotes PDGF receptor signaling pathway. In terms of assembly, (Microbial infection) Interacts with human cytomegalovirus/HHV-5 envelope glycoprotein B/gB. Also interacts with the trimeric complex gH-gL-gO. Trimer-PDGFRA interaction has an inhibitory effect on PDGFRA signaling. In terms of processing, N-glycosylated. Ubiquitinated, leading to its internalization and degradation. Post-translationally, autophosphorylated on tyrosine residues upon ligand binding. Autophosphorylation occurs in trans, i.e. one subunit of the dimeric receptor phosphorylates tyrosine residues on the other subunit. Phosphorylation at Tyr-731 and Tyr-742 is important for interaction with PIK3R1. Phosphorylation at Tyr-720 and Tyr-754 is important for interaction with PTPN11. Phosphorylation at Tyr-762 is important for interaction with CRK. Phosphorylation at Tyr-572 and Tyr-574 is important for interaction with SRC and SRC family members. Phosphorylation at Tyr-988 and Tyr-1018 is important for interaction with PLCG1. In terms of tissue distribution, detected in platelets (at protein level). Widely expressed. Detected in brain, fibroblasts, smooth muscle, heart, and embryo. Expressed in primary and metastatic colon tumors and in normal colon tissue.

It is found in the cell membrane. Its subcellular location is the cell projection. The protein localises to the cilium. The protein resides in the golgi apparatus. It catalyses the reaction L-tyrosyl-[protein] + ATP = O-phospho-L-tyrosyl-[protein] + ADP + H(+). With respect to regulation, present in an inactive conformation in the absence of bound ligand. Binding of PDGFA and/or PDGFB leads to dimerization and activation by autophosphorylation on tyrosine residues. Inhibited by imatinib, nilotinib and sorafenib. Its function is as follows. Tyrosine-protein kinase that acts as a cell-surface receptor for PDGFA, PDGFB and PDGFC and plays an essential role in the regulation of embryonic development, cell proliferation, survival and chemotaxis. Depending on the context, promotes or inhibits cell proliferation and cell migration. Plays an important role in the differentiation of bone marrow-derived mesenchymal stem cells. Required for normal skeleton development and cephalic closure during embryonic development. Required for normal development of the mucosa lining the gastrointestinal tract, and for recruitment of mesenchymal cells and normal development of intestinal villi. Plays a role in cell migration and chemotaxis in wound healing. Plays a role in platelet activation, secretion of agonists from platelet granules, and in thrombin-induced platelet aggregation. Binding of its cognate ligands - homodimeric PDGFA, homodimeric PDGFB, heterodimers formed by PDGFA and PDGFB or homodimeric PDGFC -leads to the activation of several signaling cascades; the response depends on the nature of the bound ligand and is modulated by the formation of heterodimers between PDGFRA and PDGFRB. Phosphorylates PIK3R1, PLCG1, and PTPN11. Activation of PLCG1 leads to the production of the cellular signaling molecules diacylglycerol and inositol 1,4,5-trisphosphate, mobilization of cytosolic Ca(2+) and the activation of protein kinase C. Phosphorylates PIK3R1, the regulatory subunit of phosphatidylinositol 3-kinase, and thereby mediates activation of the AKT1 signaling pathway. Mediates activation of HRAS and of the MAP kinases MAPK1/ERK2 and/or MAPK3/ERK1. Promotes activation of STAT family members STAT1, STAT3 and STAT5A and/or STAT5B. Receptor signaling is down-regulated by protein phosphatases that dephosphorylate the receptor and its down-stream effectors, and by rapid internalization of the activated receptor. This Homo sapiens (Human) protein is Platelet-derived growth factor receptor alpha (PDGFRA).